Here is a 1022-residue protein sequence, read N- to C-terminus: Antigenic heat-stable 120 kDa protein (1022 aa).

Residues 1–33 (MSKNGNQDISEFDPLNREFTEAEKQQQMQQEQE) are disordered. The span at 14–24 (PLNREFTEAEK) shows a compositional bias: basic and acidic residues.

The protein localises to the cytoplasm. This chain is Antigenic heat-stable 120 kDa protein (sca4), found in Rickettsia prowazekii (strain Madrid E).